The following is a 451-amino-acid chain: Spermidine sinapoyl-CoA acyltransferase (451 aa).

Spermidine contacts are provided by Y47, H169, S294, D316, and L378. H169 acts as the Proton acceptor in catalysis. The Proton acceptor role is filled by D391.

The protein belongs to the plant acyltransferase family. Monomer. Predominantly expressed in siliques, especially in seeds around the embryo, and, at low levels, in flowers. Barely detectable in stems, leaves, and roots.

The catalysed reaction is 2 (E)-sinapoyl-CoA + spermidine = N(1),N(8)-bis[(E)-sinapoyl]-spermidine + 2 CoA + 2 H(+). It functions in the pathway amine and polyamine metabolism; spermidine metabolism. Its function is as follows. Spermidine sinapoyl-CoA acyltransferase that mediates the accumulation of disinapoyl spermidine conjugates in seeds. Catalyzes the two conjugating steps required for the biosynthesis of N1,N8-disipanoyl-spermidine. Can also use putrescine as an acyl acceptor to convert it into monosinapoyl-putrescine. The protein is Spermidine sinapoyl-CoA acyltransferase of Arabidopsis thaliana (Mouse-ear cress).